We begin with the raw amino-acid sequence, 338 residues long: UPF0324 membrane protein HI_1643 (338 aa).

A run of 10 helical transmembrane segments spans residues Pro5–Leu23, His33–Phe55, Gly62–Phe84, Ala94–Tyr116, Leu123–Val145, Val155–Trp177, Leu222–Thr239, Ile254–Leu273, Leu280–Ala302, and Pro312–Ile334.

The protein belongs to the UPF0324 family.

The protein resides in the cell membrane. This chain is UPF0324 membrane protein HI_1643, found in Haemophilus influenzae (strain ATCC 51907 / DSM 11121 / KW20 / Rd).